Consider the following 98-residue polypeptide: MKVGLKMLHDQVLIRPHEEKDGAGGIYIPDSAKKKPTMGLVVAVGAGAKNSNGTFQPVCVKEGDIVLYRKWAGSEVEHDGVEYVVMKETDIIAIKEGK.

It belongs to the GroES chaperonin family. Heptamer of 7 subunits arranged in a ring. Interacts with the chaperonin GroEL.

It is found in the cytoplasm. Its function is as follows. Together with the chaperonin GroEL, plays an essential role in assisting protein folding. The GroEL-GroES system forms a nano-cage that allows encapsulation of the non-native substrate proteins and provides a physical environment optimized to promote and accelerate protein folding. GroES binds to the apical surface of the GroEL ring, thereby capping the opening of the GroEL channel. This Neorickettsia sennetsu (strain ATCC VR-367 / Miyayama) (Ehrlichia sennetsu) protein is Co-chaperonin GroES.